We begin with the raw amino-acid sequence, 74 residues long: uncharacterized protein (74 aa).

This is an uncharacterized protein from Schizosaccharomyces pombe (strain 972 / ATCC 24843) (Fission yeast).